A 144-amino-acid chain; its full sequence is C-type isolectin Sp-CL4 (144 aa).

In terms of domain architecture, C-type lectin spans 27–144 (DENRKVKYFE…CSEKLPFMCA (118 aa)). Intrachain disulfides connect Cys48/Cys143 and Cys119/Cys135.

Belongs to the true venom lectin family. In terms of processing, glycosylated with a carbohydrate of 383 Da. As to expression, expressed by the venom gland.

The protein resides in the secreted. In terms of biological role, the role of this hemagglutinin in the venom is unknown, because it is masked by the high venom hemolytic activity. Lectin with specificity to galactose. Induces hemagglutination. The sequence is that of C-type isolectin Sp-CL4 from Scorpaena plumieri (Spotted scorpionfish).